Consider the following 82-residue polypeptide: Omega-conotoxin-like Am6.2 (82 aa).

The first 22 residues, 1–22 (MKLTCMMIVAVLFLTAWTFVTA), serve as a signal peptide directing secretion. A propeptide spanning residues 23 to 52 (VPHSSNVLENLYLKARHEMENQEASKLNMR) is cleaved from the precursor. Intrachain disulfides connect Cys56/Cys73, Cys63/Cys77, and Cys72/Cys81. 6'-bromotryptophan; partial; in Am6.2b (major form) is present on Trp76.

The protein belongs to the conotoxin O1 family. Mostly non-hydroxylated. In terms of processing, two forms of this peptides have been described. Am6.2a (Am3136) is not unmodified, while Am6.2b (Am3214) is Trp-76 brominated. Both forms are found in venom with a much more abundant brominated form. Expressed by the venom duct.

It is found in the secreted. In terms of biological role, omega-conotoxins act at presynaptic membranes, they bind and block voltage-gated calcium channels (Cav). This is Omega-conotoxin-like Am6.2 from Conus amadis (Amadis cone).